A 619-amino-acid polypeptide reads, in one-letter code: Chaperone protein HscA homolog (619 aa).

It belongs to the heat shock protein 70 family.

In terms of biological role, chaperone involved in the maturation of iron-sulfur cluster-containing proteins. Has a low intrinsic ATPase activity which is markedly stimulated by HscB. This chain is Chaperone protein HscA homolog, found in Shewanella amazonensis (strain ATCC BAA-1098 / SB2B).